The sequence spans 217 residues: 3-demethoxyubiquinol 3-hydroxylase (217 aa).

Fe cation contacts are provided by Glu-66, Glu-96, His-99, Glu-148, Glu-180, and His-183.

The protein belongs to the COQ7 family. Fe cation is required as a cofactor.

Its subcellular location is the cell membrane. It carries out the reaction a 5-methoxy-2-methyl-3-(all-trans-polyprenyl)benzene-1,4-diol + AH2 + O2 = a 3-demethylubiquinol + A + H2O. It participates in cofactor biosynthesis; ubiquinone biosynthesis. Catalyzes the hydroxylation of 2-nonaprenyl-3-methyl-6-methoxy-1,4-benzoquinol during ubiquinone biosynthesis. The protein is 3-demethoxyubiquinol 3-hydroxylase of Xanthomonas axonopodis pv. citri (strain 306).